The sequence spans 93 residues: Small ribosomal subunit protein uS19 (93 aa).

Belongs to the universal ribosomal protein uS19 family.

Protein S19 forms a complex with S13 that binds strongly to the 16S ribosomal RNA. This is Small ribosomal subunit protein uS19 from Desulfitobacterium hafniense (strain DSM 10664 / DCB-2).